The following is a 461-amino-acid chain: L-serine dehydratase (461 aa).

This sequence belongs to the iron-sulfur dependent L-serine dehydratase family. Requires [4Fe-4S] cluster as cofactor.

The catalysed reaction is L-serine = pyruvate + NH4(+). It functions in the pathway carbohydrate biosynthesis; gluconeogenesis. The protein is L-serine dehydratase (sdaA) of Mycobacterium bovis (strain ATCC BAA-935 / AF2122/97).